A 356-amino-acid chain; its full sequence is Phosphoribosylformylglycinamidine cyclo-ligase (356 aa).

Belongs to the AIR synthase family.

The protein localises to the cytoplasm. It catalyses the reaction 2-formamido-N(1)-(5-O-phospho-beta-D-ribosyl)acetamidine + ATP = 5-amino-1-(5-phospho-beta-D-ribosyl)imidazole + ADP + phosphate + H(+). The protein operates within purine metabolism; IMP biosynthesis via de novo pathway; 5-amino-1-(5-phospho-D-ribosyl)imidazole from N(2)-formyl-N(1)-(5-phospho-D-ribosyl)glycinamide: step 2/2. This chain is Phosphoribosylformylglycinamidine cyclo-ligase, found in Nitrobacter hamburgensis (strain DSM 10229 / NCIMB 13809 / X14).